The following is a 285-amino-acid chain: 2-dehydro-3-deoxyphosphooctonate aldolase (285 aa).

Belongs to the KdsA family.

The protein localises to the cytoplasm. The enzyme catalyses D-arabinose 5-phosphate + phosphoenolpyruvate + H2O = 3-deoxy-alpha-D-manno-2-octulosonate-8-phosphate + phosphate. The protein operates within carbohydrate biosynthesis; 3-deoxy-D-manno-octulosonate biosynthesis; 3-deoxy-D-manno-octulosonate from D-ribulose 5-phosphate: step 2/3. It participates in bacterial outer membrane biogenesis; lipopolysaccharide biosynthesis. The sequence is that of 2-dehydro-3-deoxyphosphooctonate aldolase from Acidovorax ebreus (strain TPSY) (Diaphorobacter sp. (strain TPSY)).